A 387-amino-acid chain; its full sequence is Acetylserotonin O-methyltransferase (387 aa).

S-adenosyl-L-methionine is bound by residues Tyr-153, Trp-170, Glu-216, 246-248, and Arg-263; that span reads GDF. His-266 acts as the Proton donor/acceptor in catalysis. Residues Asp-267 and Gln-317 each coordinate substrate. The disordered stretch occupies residues 355–387; that stretch reads ARGGGAGARSDGGGGEATSQTGSGTGREVGAQD. Residues 356-370 show a composition bias toward gly residues; sequence RGGGAGARSDGGGGE.

This sequence belongs to the class I-like SAM-binding methyltransferase superfamily. Cation-independent O-methyltransferase family. As to quaternary structure, homodimer.

The enzyme catalyses N-acetylserotonin + S-adenosyl-L-methionine = melatonin + S-adenosyl-L-homocysteine + H(+). Its pathway is aromatic compound metabolism; melatonin biosynthesis; melatonin from serotonin: step 1/2. Its function is as follows. Catalyzes the transfer of a methyl group onto N-acetylserotonin, producing melatonin (N-acetyl-5-methoxytryptamine). The protein is Acetylserotonin O-methyltransferase (Asmt) of Mus musculus molossinus (Japanese house mouse).